A 118-amino-acid polypeptide reads, in one-letter code: Myotrophin (118 aa).

ANK repeat units lie at residues 1–30, 34–65, and 67–98; these read MGDKELMWALKNGDLDEVKNILVKAEDVNR, GGRKPLHYAADCGQAEMLEFLLSKGADVNAPD, and HGITPLLSATYEGHVTCVKILLEKGADKNRKG.

The protein belongs to the myotrophin family.

The protein resides in the cytoplasm. Its subcellular location is the nucleus. It localises to the perinuclear region. Its function is as follows. Regulates NF-kappa-B transcription factor activity. Promotes growth of cardiomyocytes, but not cardiomyocyte proliferation. Promotes cardiac muscle hypertrophy. Plays a role in the regulation of the growth of actin filaments. Inhibits the activity of the F-actin-capping protein complex. The polypeptide is Myotrophin (mtpn) (Danio rerio (Zebrafish)).